The primary structure comprises 991 residues: Envelope glycoprotein gp160 (991 aa).

An N-terminal signal peptide occupies residues 1–106; the sequence is MTSKESKPSR…CLMWEMRKGN (106 aa). Residues 107-840 lie on the Extracellular side of the membrane; the sequence is QCQAEEVIAL…WSSWFSWLKY (734 aa). N-linked (GlcNAc...) asparagine; by host glycosylation is found at N140, N161, N206, N258, N298, N364, N381, N387, N403, N435, N439, N470, N475, N481, N491, N501, N515, N527, N537, N542, N543, and N568. A fusion peptide region spans residues 665–685; that stretch reads GIGLVIVLAIMAIIAAAGAGL. Residues 697 to 747 are a coiled coil; sequence RTAVQSLANATAAQQEVLEASYAMVQHIAKGIRILEARVARVEALVDRMMV. Residue N705 is glycosylated (N-linked (GlcNAc...) asparagine; by host). Residues 731-747 form an immunosuppression region; that stretch reads LEARVARVEALVDRMMV. 4 N-linked (GlcNAc...) asparagine; by host glycosylation sites follow: N773, N780, N796, and N830. Residues 788–823 are a coiled coil; sequence EEIEQHEGNLSLLLREAALQVHIAQRDARRIPDAWK. The chain crosses the membrane as a helical span at residues 841–861; sequence VPWIIMGIVGLICFRILMCVI. The Cytoplasmic portion of the chain corresponds to 862 to 991; sequence SMCLQAYKQV…PTLENDYVEL (130 aa). C864 carries S-palmitoyl cysteine; by host lipidation.

As to quaternary structure, the mature envelope protein (Env) consists of a trimer of SU-TM heterodimers attached by noncovalent interactions or by a labile interchain disulfide bond. In terms of processing, specific enzymatic cleavages in vivo yield mature proteins. Envelope glycoproteins are synthesized as an inactive precursor that is N-glycosylated and processed likely by host cell furin or by a furin-like protease in the Golgi to yield the mature SU and TM proteins. The cleavage site between SU and TM requires the minimal sequence [KR]-X-[KR]-R. Post-translationally, the transmembrane protein is palmitoylated.

The protein resides in the virion membrane. The protein localises to the host cell membrane. In terms of biological role, the surface protein (SU) attaches the virus to the host cell by binding to its receptor. This interaction triggers the refolding of the transmembrane protein (TM) and is thought to activate its fusogenic potential by unmasking its fusion peptide. Fusion occurs at the host cell plasma membrane. Its function is as follows. The transmembrane protein (TM) acts as a class I viral fusion protein. Under the current model, the protein has at least 3 conformational states: pre-fusion native state, pre-hairpin intermediate state, and post-fusion hairpin state. During viral and target cell membrane fusion, the coiled coil regions (heptad repeats) assume a trimer-of-hairpins structure, positioning the fusion peptide in close proximity to the C-terminal region of the ectodomain. The formation of this structure appears to drive apposition and subsequent fusion of viral and target cell membranes. Membranes fusion leads to delivery of the nucleocapsid into the cytoplasm. The chain is Envelope glycoprotein gp160 (env) from Ovis aries (Sheep).